The sequence spans 228 residues: Deoxyguanosine kinase (228 aa).

8 to 16 (GPIGAGKSS) lines the ATP pocket. Substrate-binding residues include Glu32, Tyr44, and Gln55. Asp78 serves as the catalytic Proton acceptor. Positions 79, 84, and 149 each coordinate substrate.

This sequence belongs to the DCK/DGK family. As to quaternary structure, heterodimer of a deoxyadenosine (DAK) and a deoxyguanosine kinase (DGK).

It catalyses the reaction 2'-deoxyguanosine + ATP = dGMP + ADP + H(+). In terms of biological role, DGK/DAK plays an essential role in generating the deoxyribonucleotide precursors, dGTP and dATP, for DNA metabolism. The chain is Deoxyguanosine kinase from Lactobacillus acidophilus (strain ATCC 700396 / NCK56 / N2 / NCFM).